We begin with the raw amino-acid sequence, 329 residues long: Phenylalanine--tRNA ligase alpha subunit (329 aa).

Position 254 (E254) interacts with Mg(2+).

The protein belongs to the class-II aminoacyl-tRNA synthetase family. Phe-tRNA synthetase alpha subunit type 1 subfamily. In terms of assembly, tetramer of two alpha and two beta subunits. It depends on Mg(2+) as a cofactor.

It is found in the cytoplasm. It carries out the reaction tRNA(Phe) + L-phenylalanine + ATP = L-phenylalanyl-tRNA(Phe) + AMP + diphosphate + H(+). This Haemophilus influenzae (strain PittEE) protein is Phenylalanine--tRNA ligase alpha subunit.